The following is a 551-amino-acid chain: Inosine-5'-monophosphate dehydrogenase (551 aa).

2 consecutive CBS domains span residues 102-163 (FILD…PLSE) and 165-221 (MTSD…PLAS). Residues 258–260 (DSS) and 308–310 (GMG) each bind NAD(+). 2 residues coordinate K(+): Gly310 and Gly312. Ser313 is a binding site for IMP. Residue Cys315 coordinates K(+). The Thioimidate intermediate role is filled by Cys315. Residues 349-351 (DGG), 372-373 (GS), and 396-400 (YRGMG) contribute to the IMP site. A disordered region spans residues 407–462 (AGTRRTASPPARGLRSPEASPSTAASSGGASRASALSEASPSAKSEASRTSTSTGS). Residues 422–462 (SPEASPSTAASSGGASRASALSEASPSAKSEASRTSTSTGS) show a composition bias toward low complexity. Residue Arg465 is the Proton acceptor of the active site. IMP is bound at residue Gln477. Glu536 and Gly537 together coordinate K(+).

This sequence belongs to the IMPDH/GMPR family. In terms of assembly, homotetramer. K(+) is required as a cofactor.

Its subcellular location is the cytoplasm. The catalysed reaction is IMP + NAD(+) + H2O = XMP + NADH + H(+). Its pathway is purine metabolism; XMP biosynthesis via de novo pathway; XMP from IMP: step 1/1. Mycophenolic acid (MPA) is a non-competitive inhibitor that prevents formation of the closed enzyme conformation by binding to the same site as the amobile flap. In contrast, mizoribine monophosphate (MZP) is a competitive inhibitor that induces the closed conformation. MPA is a potent inhibitor of mammalian IMPDHs but a poor inhibitor of the bacterial enzymes. MZP is a more potent inhibitor of bacterial IMPDH. Potently inhibited by MPA and adenine dinucleotide analogs such as thiazole-4-carboxamide adenine dinucleotide (TAD). Functionally, catalyzes the conversion of inosine 5'-phosphate (IMP) to xanthosine 5'-phosphate (XMP), the first committed and rate-limiting step in the de novo synthesis of guanine nucleotides, and therefore plays an important role in the regulation of cell growth. The protein is Inosine-5'-monophosphate dehydrogenase of Toxoplasma gondii.